Consider the following 1234-residue polypeptide: Complement factor H (1234 aa).

A signal peptide spans 1 to 18; it reads MRLSARIIWLILWTVCAA. Sushi domains lie at 19 to 82, 83 to 143, 144 to 207, 208 to 264, 265 to 322, 324 to 386, 387 to 444, 446 to 507, 508 to 566, 567 to 624, 627 to 685, 688 to 745, 750 to 804, 806 to 863, 865 to 933, 934 to 991, 992 to 1050, 1051 to 1109, 1112 to 1170, and 1171 to 1234; these read EDCK…ICRK, KPCG…LCEV, VKCL…RCVE, ILCT…FCEE, KRCS…RCTL, PCEF…VPCV, RKCV…KCIR, KTCS…SCIK, SCDM…SCYE, RECS…TCKG, ASCA…VCIE, RTCG…KCVA, EKCR…NCTS, TSCP…RCIE, IPCS…RCVG, LPCG…KCIK, TDCD…VCKD, NSCV…KCRD, GKCG…TCLH, and ACVI…PTCV. Intrachain disulfides connect Cys21/Cys66, Cys52/Cys80, Cys85/Cys129, Cys114/Cys141, Cys146/Cys192, Cys178/Cys205, Cys210/Cys251, Cys237/Cys262, Cys267/Cys309, Cys294/Cys320, Cys325/Cys374, Cys357/Cys385, Cys389/Cys431, Cys416/Cys442, Cys448/Cys494, Cys477/Cys505, Cys509/Cys553, Cys536/Cys564, Cys569/Cys610, Cys597/Cys622, Cys629/Cys672, Cys658/Cys683, Cys690/Cys732, Cys718/Cys743, Cys752/Cys791, Cys780/Cys802, Cys808/Cys850, Cys836/Cys861, Cys867/Cys920, Cys906/Cys931, Cys936/Cys978, Cys964/Cys989, Cys994/Cys1037, Cys1023/Cys1048, Cys1053/Cys1096, Cys1082/Cys1107, Cys1114/Cys1157, Cys1143/Cys1168, Cys1172/Cys1223, and Cys1206/Cys1233. N-linked (GlcNAc...) asparagine glycans are attached at residues Asn676, Asn721, Asn773, and Asn801. A disordered region spans residues 872–896; that stretch reads TIEHGSINLPRSSEERRDSIESSSH. A compositionally biased stretch (basic and acidic residues) spans 883–896; sequence SSEERRDSIESSSH. Asn1030 and Asn1061 each carry an N-linked (GlcNAc...) asparagine glycan. At Ser1198 the chain carries Phosphoserine. N-linked (GlcNAc...) asparagine glycosylation is present at Asn1225.

Homodimer. Also forms homooligomers. Interacts with complement protein C3b; this interaction inhibits complement activation. Interacts with complement protein C3d. Interacts with CR3/ITGAM; this interaction mediates adhesion of neutrophils to pathogens leading to pathogen clearance. Sulfated on tyrosine residues. In terms of tissue distribution, CFH is one of the most abundant complement components in blood where the liver is the major source of CFH protein in vivo. in addition, CFH is secreted by additional cell types including monocytes, fibroblasts, or endothelial cells.

Its subcellular location is the secreted. In terms of biological role, glycoprotein that plays an essential role in maintaining a well-balanced immune response by modulating complement activation. Acts as a soluble inhibitor of complement, where its binding to self markers such as glycan structures prevents complement activation and amplification on cell surfaces. Accelerates the decay of the complement alternative pathway (AP) C3 convertase C3bBb, thus preventing local formation of more C3b, the central player of the complement amplification loop. As a cofactor of the serine protease factor I, CFH also regulates proteolytic degradation of already-deposited C3b. In addition, mediates several cellular responses through interaction with specific receptors. For example, interacts with CR3/ITGAM receptor and thereby mediates the adhesion of human neutrophils to different pathogens. In turn, these pathogens are phagocytosed and destroyed. This is Complement factor H (Cfh) from Mus musculus (Mouse).